The sequence spans 334 residues: Formamidase (334 aa).

The region spanning 14–260 is the CN hydrolase domain; it reads FLVAAIQFPV…WEIVTGEIYP (247 aa). The Proton acceptor role is filled by E60. K133 (proton donor) is an active-site residue. C166 (nucleophile) is an active-site residue.

It belongs to the carbon-nitrogen hydrolase superfamily. Aliphatic amidase family.

It catalyses the reaction formamide + H2O = formate + NH4(+). In terms of biological role, is an aliphatic amidase with a restricted substrate specificity, as it only hydrolyzes formamide. In Helicobacter pylori (strain P12), this protein is Formamidase.